Here is a 102-residue protein sequence, read N- to C-terminus: Small ribosomal subunit protein uS10 (102 aa).

The protein belongs to the universal ribosomal protein uS10 family. In terms of assembly, part of the 30S ribosomal subunit.

Functionally, involved in the binding of tRNA to the ribosomes. This chain is Small ribosomal subunit protein uS10, found in Methylobacterium radiotolerans (strain ATCC 27329 / DSM 1819 / JCM 2831 / NBRC 15690 / NCIMB 10815 / 0-1).